The following is a 248-amino-acid chain: 14-3-3 protein sigma (248 aa).

Ser5, Ser74, and Ser248 each carry phosphoserine.

It belongs to the 14-3-3 family. In terms of assembly, homodimer. Interacts with KRT17 and SAMSN1. Found in a complex with XPO7, EIF4A1, ARHGAP1, VPS26A, VPS29 and VPS35. Interacts with GAB2. Interacts with SRPK2. Interacts with COPS6. Interacts with COP1; this interaction leads to proteasomal degradation. Interacts with the 'Thr-369' phosphorylated form of DAPK2. Interacts with PI4KB. Interacts with SLITRK1. Interacts with LRRK2; this interaction is dependent on LRRK2 phosphorylation. Interacts with PKP3 (via N-terminus); the interaction maintains the cytoplasmic pool of PKP3, facilitates PKP3 exchange at desmosomes and restricts PKP3 localization to existing desmosome cell junctions. Interacts with LCP2. Ubiquitinated. Ubiquitination by RFFL induces proteasomal degradation and indirectly regulates p53/TP53 activation. Expressed in dorsal skin (at protein level). Expressed in the basal layer of skin epithelium and in outer root sheath of hair follicle.

It localises to the cytoplasm. The protein localises to the nucleus. Its subcellular location is the secreted. In terms of biological role, adapter protein implicated in the regulation of a large spectrum of both general and specialized signaling pathways. Binds to a large number of partners, usually by recognition of a phosphoserine or phosphothreonine motif. Binding generally results in the modulation of the activity of the binding partner. Promotes cytosolic retention of GBP1 GTPase by binding to phosphorylated GBP1, thereby inhibiting the innate immune response. Also acts as a TP53/p53-regulated inhibitor of G2/M progression. When bound to KRT17, regulates protein synthesis and epithelial cell growth by stimulating Akt/mTOR pathway. Acts to maintain desmosome cell junction adhesion in epithelial cells via interacting with and sequestering PKP3 to the cytoplasm, thereby restricting its translocation to existing desmosome structures and therefore maintaining desmosome protein homeostasis. Also acts to facilitate PKP3 exchange at desmosome plaques, thereby maintaining keratinocyte intercellular adhesion. May also regulate MDM2 autoubiquitination and degradation and thereby activate p53/TP53. The polypeptide is 14-3-3 protein sigma (Sfn) (Mus musculus (Mouse)).